Here is a 412-residue protein sequence, read N- to C-terminus: Argininosuccinate synthase (412 aa).

Ala10 to Ser18 serves as a coordination point for ATP. Tyr89 contributes to the L-citrulline binding site. An ATP-binding site is contributed by Gly119. L-aspartate contacts are provided by Thr121, Asn125, and Asp126. L-citrulline is bound at residue Asn125. L-citrulline contacts are provided by Arg129, Ser177, Glu261, and Tyr273.

It belongs to the argininosuccinate synthase family. Type 1 subfamily. As to quaternary structure, homotetramer.

The protein resides in the cytoplasm. It catalyses the reaction L-citrulline + L-aspartate + ATP = 2-(N(omega)-L-arginino)succinate + AMP + diphosphate + H(+). It participates in amino-acid biosynthesis; L-arginine biosynthesis; L-arginine from L-ornithine and carbamoyl phosphate: step 2/3. This chain is Argininosuccinate synthase, found in Bifidobacterium longum (strain NCC 2705).